Here is a 67-residue protein sequence, read N- to C-terminus: UPF0435 protein SSP0913 (67 aa).

It belongs to the UPF0435 family.

The sequence is that of UPF0435 protein SSP0913 from Staphylococcus saprophyticus subsp. saprophyticus (strain ATCC 15305 / DSM 20229 / NCIMB 8711 / NCTC 7292 / S-41).